Consider the following 342-residue polypeptide: Replication factor C subunit 3 (342 aa).

ATP is bound at residue 63–70 (GPPGTGKT).

Belongs to the activator 1 small subunits family. As to quaternary structure, heteropentamer of subunits rfc1, rfc2, rfc3, rfc4 and rfc5 that forms a complex (RFC) with PCNA in the presence of ATP. Two other complexes exist where rfc1 can be replaced by either ctf18 or elg1 to form the ctf18-RFC or the elg1-RFC complexes respectively.

The protein resides in the nucleus. In terms of biological role, the elongation of primed DNA templates by DNA polymerase delta and epsilon requires the action of the accessory proteins PCNA and activator 1. Subunit 3 binds ATP. Also involved in replication and DNA damage checkpoint controls, probably functioning as a checkpoint sensor. This is Replication factor C subunit 3 (rfc3) from Schizosaccharomyces pombe (strain 972 / ATCC 24843) (Fission yeast).